A 261-amino-acid chain; its full sequence is Undecaprenyl-diphosphatase (261 aa).

Transmembrane regions (helical) follow at residues 1–21 (MTVLQAIVLGLVQGVGEFLPI), 40–60 (GLTFDVALHLGTLIAVVAYFW), 79–99 (GRLFWYLIVASIPGAIFGVLF), 106–126 (IFRSPLLIALTLTLMGLGLWW), 140–160 (VNLFDGIIVGISQALAIIPGV), 185–205 (FLMSVPIIAGAALLKLKELPL), 210–230 (LAFIAGVLTAAVVGFLAIKFL), and 239–259 (YLLFTGYRILLAALIVAVFWL).

It belongs to the UppP family.

The protein resides in the cell membrane. The catalysed reaction is di-trans,octa-cis-undecaprenyl diphosphate + H2O = di-trans,octa-cis-undecaprenyl phosphate + phosphate + H(+). Functionally, catalyzes the dephosphorylation of undecaprenyl diphosphate (UPP). Confers resistance to bacitracin. This chain is Undecaprenyl-diphosphatase, found in Moorella thermoacetica (strain ATCC 39073 / JCM 9320).